The sequence spans 596 residues: V-type ATP synthase alpha chain (596 aa).

233–240 (GPFGAGKT) contributes to the ATP binding site.

It belongs to the ATPase alpha/beta chains family.

It catalyses the reaction ATP + H2O + 4 H(+)(in) = ADP + phosphate + 5 H(+)(out). In terms of biological role, produces ATP from ADP in the presence of a proton gradient across the membrane. The V-type alpha chain is a catalytic subunit. This Streptococcus gordonii (strain Challis / ATCC 35105 / BCRC 15272 / CH1 / DL1 / V288) protein is V-type ATP synthase alpha chain.